Consider the following 241-residue polypeptide: Endonuclease NucS (241 aa).

Belongs to the NucS endonuclease family.

The protein resides in the cytoplasm. Its function is as follows. Cleaves both 3' and 5' ssDNA extremities of branched DNA structures. The protein is Endonuclease NucS of Corynebacterium jeikeium (strain K411).